The sequence spans 298 residues: Lipoyl synthase (298 aa).

Residues cysteine 40, cysteine 45, cysteine 51, cysteine 67, cysteine 71, cysteine 74, and serine 280 each contribute to the [4Fe-4S] cluster site. Residues 53–269 form the Radical SAM core domain; that stretch reads AVRRTATFMI…KEIALSKGFT (217 aa).

Belongs to the radical SAM superfamily. Lipoyl synthase family. [4Fe-4S] cluster serves as cofactor.

Its subcellular location is the cytoplasm. The enzyme catalyses [[Fe-S] cluster scaffold protein carrying a second [4Fe-4S](2+) cluster] + N(6)-octanoyl-L-lysyl-[protein] + 2 oxidized [2Fe-2S]-[ferredoxin] + 2 S-adenosyl-L-methionine + 4 H(+) = [[Fe-S] cluster scaffold protein] + N(6)-[(R)-dihydrolipoyl]-L-lysyl-[protein] + 4 Fe(3+) + 2 hydrogen sulfide + 2 5'-deoxyadenosine + 2 L-methionine + 2 reduced [2Fe-2S]-[ferredoxin]. It functions in the pathway protein modification; protein lipoylation via endogenous pathway; protein N(6)-(lipoyl)lysine from octanoyl-[acyl-carrier-protein]. Catalyzes the radical-mediated insertion of two sulfur atoms into the C-6 and C-8 positions of the octanoyl moiety bound to the lipoyl domains of lipoate-dependent enzymes, thereby converting the octanoylated domains into lipoylated derivatives. This is Lipoyl synthase from Geobacillus sp. (strain WCH70).